The sequence spans 475 residues: Putative response regulator NtrX-like (475 aa).

The Response regulatory domain occupies 5 to 121 (DVLIVDDEES…KLVILLKRAC (117 aa)). A 4-aspartylphosphate modification is found at D54. The 227-residue stretch at 143–369 (LVGGCSVTLK…LRNVVEWTLI (227 aa)) folds into the Sigma-54 factor interaction domain. Residues 171–178 (GKVGSGKE) and 232–241 (ANNGTLYIDE) each bind ATP.

In terms of biological role, member of the two-component regulatory system RF_0895/RF_0427. The polypeptide is Putative response regulator NtrX-like (Rickettsia felis (strain ATCC VR-1525 / URRWXCal2) (Rickettsia azadi)).